The sequence spans 164 residues: Peptidyl-prolyl cis-trans isomerase CYP18-2 (164 aa).

Residues Val12 to Val162 form the PPIase cyclophilin-type domain.

The protein belongs to the cyclophilin-type PPIase family. Ubiquitous.

Its subcellular location is the cytoplasm. The catalysed reaction is [protein]-peptidylproline (omega=180) = [protein]-peptidylproline (omega=0). Its function is as follows. PPIases accelerate the folding of proteins. It catalyzes the cis-trans isomerization of proline imidic peptide bonds in oligopeptides. In Arabidopsis thaliana (Mouse-ear cress), this protein is Peptidyl-prolyl cis-trans isomerase CYP18-2 (CYP18-2).